Consider the following 643-residue polypeptide: MGQESSKPVWPNPTGGYQSNTGRRYGRRHAYVSFRPPTSQRERIASQRKTNSEVPMHRSAPSQTTKRSRSPFSTTRRSWDDSESSGTNLNIDNEDYSRYPPREYRASGSRRGMAYGHIDSYGADDSEEEGAGPVERPPVRGKTGKFKDDKLYDPEKGARSLAGPPPHFSSFSRDVREERDKLDPVPAARCSASRADFLPQSSVASQSSSEGKLATKGDSSERERREQNLPARPSRAPVSICGGGENTSKSAEEPVVRPKIRNLASPNCVKPKIFFDTDDDDDMPHSTSRWRDTANDNEGHSDGLARRGRGESSSGYPEPKYPEDKREARSDQVKPEKVPRRRRTMADPDFWTHSDDYYKYCDEDSDSDKEWIAALRRKYRSREQTLSSSGESWETLPGKEEREPPQAKVSASTGTSPGPGASASAGAGAGASAGSNGSNYLEEVREPSLQEEQASLEEGEIPWLQYHENDSSSEGDNDSGHELMQPGVFMLDGNNNLEDDSSVSEDLEVDWSLFDGFADGLGVAEAISYVDPQFLTYMALEERLAQAMETALAHLESLAVDVEVANPPASKESIDALPEILVTEDHGAVGQEMCCPICCSEYVKGEVATELPCHHYFHKPCVSIWLQKSGTCPVCRCMFPPPL.

Residues 1 to 363 form a disordered region; it reads MGQESSKPVW…SDDYYKYCDE (363 aa). 3 stretches are compositionally biased toward basic and acidic residues: residues 95–105, 145–158, and 173–183; these read DYSRYPPREYR, KFKD…EKGA, and RDVREERDKLD. A compositionally biased stretch (low complexity) spans 200–209; that stretch reads QSSVASQSSS. The span at 213-227 shows a compositional bias: basic and acidic residues; the sequence is LATKGDSSERERREQ. Ser265 carries the phosphoserine modification. At Thr277 the chain carries Phosphothreonine. 2 stretches are compositionally biased toward basic and acidic residues: residues 289-310 and 320-362; these read RWRD…RGRG and KYPE…KYCD. Phosphoserine is present on residues Ser365 and Ser367. The segment at 380-454 is disordered; sequence RSREQTLSSS…REPSLQEEQA (75 aa). Residues 410 to 439 show a composition bias toward low complexity; that stretch reads SASTGTSPGPGASASAGAGAGASAGSNGSN. An RING-type zinc finger spans residues 595 to 636; the sequence is CPICCSEYVKGEVATELPCHHYFHKPCVSIWLQKSGTCPVCR.

As to quaternary structure, binds ubiquitin-conjugating enzymes (E2s). In vitro, interacts with the ubiquitin-conjugating enzyme, UBE2D2. In terms of processing, substrate for E2-dependent ubiquitination. In terms of tissue distribution, expressed in various regions of the brain including the cerebellum, cerebral cortex, medulla, occipital pole, frontal lobe, temporal lobe and putamen. Highest levels in the cerebral cortex.

It catalyses the reaction S-ubiquitinyl-[E2 ubiquitin-conjugating enzyme]-L-cysteine + [acceptor protein]-L-lysine = [E2 ubiquitin-conjugating enzyme]-L-cysteine + N(6)-ubiquitinyl-[acceptor protein]-L-lysine.. Has E2-dependent E3 ubiquitin-protein ligase activity. Ubiquitinates MAGED1 antigen leading to its subsequent degradation by proteasome. May be involved in protein sorting. This Homo sapiens (Human) protein is E3 ubiquitin-protein ligase Praja-1 (PJA1).